Here is a 520-residue protein sequence, read N- to C-terminus: Laccase-4 (520 aa).

The signal sequence occupies residues 1–18 (MGRFSSLCALTAVIHSFG). Plastocyanin-like domains follow at residues 24–149 (IGPV…MVVY), 161–303 (VDDE…ILRY), and 370–491 (TVPV…FSED). 2 N-linked (GlcNAc...) asparagine glycosylation sites follow: Asn-73 and Asn-76. Cu cation is bound by residues His-86, His-88, His-131, and His-133. 2 disulfide bridges follow: Cys-107/Cys-509 and Cys-139/Cys-227. N-linked (GlcNAc...) asparagine glycosylation is found at Asn-239 and Asn-399. Cu cation contacts are provided by His-418, His-421, His-423, His-473, Cys-474, His-475, and His-479. Asn-497 carries an N-linked (GlcNAc...) asparagine glycan.

Belongs to the multicopper oxidase family. In terms of assembly, homodimer. Cu cation is required as a cofactor.

Its subcellular location is the secreted. The enzyme catalyses 4 hydroquinone + O2 = 4 benzosemiquinone + 2 H2O. Lignin degradation and detoxification of lignin-derived products. The polypeptide is Laccase-4 (LCC4) (Trametes villosa (White-rot fungus)).